Consider the following 697-residue polypeptide: Sentrin-specific protease (697 aa).

The span at Met-1 to Ser-14 shows a compositional bias: basic and acidic residues. Disordered stretches follow at residues Met-1–Gly-47 and Ser-365–Tyr-387. The short motif at Arg-15–Trp-19 is the Nuclear localization signal element. The short motif at Lys-462–Lys-467 is the Nuclear localization signal element. The segment at Ile-501–Ala-664 is protease. Active-site residues include His-585, Asp-602, and Cys-653.

This sequence belongs to the peptidase C48 family.

It is found in the nucleus envelope. Protease that deconjugates smo-1 from targeted proteins and may catalyze the processing of smo-1 to its mature form. This is Sentrin-specific protease (ulp-1) from Caenorhabditis elegans.